Reading from the N-terminus, the 238-residue chain is Transcriptional repressor ThaA (238 aa).

Positions 169-234 (IPGEIARVSL…HAAVKATLVG (66 aa)) constitute an HTH luxR-type domain. The H-T-H motif DNA-binding region spans 193 to 212 (VSEISSILQMSVRNINFHIQ).

Belongs to the autoinducer-regulated transcriptional regulatory protein family.

In terms of biological role, represses thailandamide production. The chain is Transcriptional repressor ThaA from Burkholderia thailandensis (strain ATCC 700388 / DSM 13276 / CCUG 48851 / CIP 106301 / E264).